We begin with the raw amino-acid sequence, 1112 residues long: MGVQGFQDYIEKHCPSAVVPVELQKLARGSLVGGGRQRPPQTPLRLLVDADNCLHRLYGGFYTDWVSGGQWNHMLGYLAALAKACFGGNIELFVFFNGALEKARLHEWVKRQGNERQTAQQIVSHVQNKGTPPPKVWFLPPVCMAHCIRLALIRFHVKVAQSIEDHHQEVIGFCRENGFHGLVAYDSDYALCNIPYYFSAHALKLSRNGKSLTTSQYLMHEVAKQLDLNPNRFPIFAALLGNHILPDEDLASFHWSLLGPEHPLASLKVRAHQLVLPPCDVVIKAVADYVRNIHDTSDLDAIAKDVFQHSQSRTDDKVIRFKRAVGYYSATSKPMPFHPPHYLARPNPFGMPGMVPPYVPPQMLNIPQTSLQAKPAVPQVPSPGGTPGQAPYPYSLSEPALTLDTSGKNLTEQNSYSNIPHEGKHTPLYERSSPINLAQSGSPNHVDSAYFPGSSTSSSSDNDEGGGGATNHISGNKIGWEKTGSHAEPLARGDPGDQVKVEGSSTASSGSQLAEGKGSHMGTVQPIPCLLSMPTRNHMDITTPPLPPVAPEVLRVAEHRHKKGLMYPYIFHILTKGEIKIAVSIEDEANKDLPPAALLYRPVRQYVYGVLFSLAESRKKTERLAFRKNRLPPEFSPLIIKEWAAYKGKSPQTPELVEALAFREWTCPNLKRLWLGKAVEDKNRRMRAFLACMRSDTPAMLNPANVPTHLMVLCCVLRYMVQWPGARILRRQELDAFLAQALSPKLYEPDQLQELKIDNLDPRGIQLSALFMSGVDMALFANDACGQPIPWEHCCPWMYFDGKLFQSKLLKASREKTPLIDLCDGQAEQAAKVEKMRQSILEGLSFSRQNHPLPFPPPPALPFYPASVYPRHFGPVPPSQGRGRGFAGVCGFGGHYGETVATGPYRAFRVTAASGHCGAFSGSDSSRTSKSQGGVQPIPSQGGKLEIAGTVVGHWAGSRRGRGGRGPFPLQVVSVGGPARGRPRGVISTPVIRTFGRGGRYYGRGYKSQGAIQGRPPYAASAEEVAKELKSKSGESKSSAVSLAENGVMAEEKPVPQLNGSTGDPRVPSHSESALNNDSKPCNTNPHLNALSTDSACRREAALEAAVLNKEE.

The segment at 339–403 is interaction with YES1, SRC and FYN; it reads PPHYLARPNP…YSLSEPALTL (65 aa). A disordered region spans residues 372 to 525; that stretch reads QAKPAVPQVP…GKGSHMGTVQ (154 aa). 2 stretches are compositionally biased toward polar residues: residues 403–418 and 433–445; these read LDTS…SYSN and SPIN…SPNH. Residues 479-500 are compositionally biased toward basic and acidic residues; that stretch reads GWEKTGSHAEPLARGDPGDQVK. Residues 503–512 show a composition bias toward polar residues; the sequence is GSSTASSGSQ. At T653 the chain carries Phosphothreonine. The tract at residues 827-1112 is RNA binding; that stretch reads AEQAAKVEKM…LEAAVLNKEE (286 aa). 3 positions are modified to omega-N-methylarginine: R871, R882, and R884. Positions 919–943 are disordered; sequence AFSGSDSSRTSKSQGGVQPIPSQGG. The span at 922-934 shows a compositional bias: polar residues; it reads GSDSSRTSKSQGG. K930 is subject to N6-acetyllysine. Phosphoserine is present on S958. 2 positions are modified to omega-N-methylarginine: R980 and R984. Residues S1021 and S1042 each carry the phosphoserine modification. The interval 1030–1090 is disordered; sequence KSKSGESKSS…PCNTNPHLNA (61 aa). The span at 1070–1090 shows a compositional bias: polar residues; it reads HSESALNNDSKPCNTNPHLNA.

Belongs to the constitutive coactivator of PPAR-gamma family. As to quaternary structure, interacts with PURA. Interacts with SRC family protein kinases YES1, SRC and FYN. Upon tyrosine phosphorylation, interacts with PIK3R1. Interacts with IGF2BP1/IMP-1 in an RNA-dependent manner. In terms of processing, arg-980 is dimethylated, probably to asymmetric dimethylarginine. Post-translationally, phosphorylated on tyrosine by src family kinases upon ultraviolet exposure. As to expression, in the brain, predominantly expressed in the hippocampus, caudate putamen, cerebral cortex and cerebellum. Expression is restricted to neurons (at protein level).

The protein localises to the cytoplasm. It localises to the cell membrane. Its function is as follows. Component of the oxidative stress-induced survival signaling. May regulate the activation of SRC family protein kinases. May act as a scaffolding protein enabling SRC family protein kinases to phosphorylate and activate PI3-kinase. Binds IGF2 RNA and promotes the production of IGF2 protein. The protein is Constitutive coactivator of PPAR-gamma-like protein 1 (FAM120A) of Mus musculus (Mouse).